A 124-amino-acid polypeptide reads, in one-letter code: Large ribosomal subunit protein uL14 (124 aa).

Belongs to the universal ribosomal protein uL14 family. In terms of assembly, part of the 50S ribosomal subunit. Forms a cluster with proteins L3 and L19. In the 70S ribosome, L14 and L19 interact and together make contacts with the 16S rRNA in bridges B5 and B8.

In terms of biological role, binds to 23S rRNA. Forms part of two intersubunit bridges in the 70S ribosome. In Mycoplasmoides gallisepticum (strain R(low / passage 15 / clone 2)) (Mycoplasma gallisepticum), this protein is Large ribosomal subunit protein uL14.